The sequence spans 198 residues: Beta-crystallin A1 (198 aa).

The segment at Met1–Pro13 is N-terminal arm. Beta/gamma crystallin 'Greek key' domains are found at residues Trp14–Cys53 and Gly54–Cys100. The segment at Ser101 to Glu106 is connecting peptide. Beta/gamma crystallin 'Greek key' domains follow at residues Ser107–Cys148 and Gly149–Gln197.

This sequence belongs to the beta/gamma-crystallin family. As to quaternary structure, homo/heterodimer, or complexes of higher-order. The structure of beta-crystallin oligomers seems to be stabilized through interactions between the N-terminal arms.

Its function is as follows. Crystallins are the dominant structural components of the vertebrate eye lens. The sequence is that of Beta-crystallin A1 from Rana temporaria (European common frog).